Consider the following 278-residue polypeptide: Protoheme IX farnesyltransferase 1 (278 aa).

Helical transmembrane passes span 12–32 (VIWL…GGVD), 35–55 (LFSL…FNHY), 76–96 (LITP…GISL), 98–118 (FLLL…FYAV), 129–149 (WLNI…GYAL), 158–178 (AVLI…ALAF), 199–221 (ERAV…WLYL), 226–248 (GAGG…YAAV), and 255–275 (MWKM…ALIL).

This sequence belongs to the UbiA prenyltransferase family. Protoheme IX farnesyltransferase subfamily.

It localises to the cell membrane. The enzyme catalyses heme b + (2E,6E)-farnesyl diphosphate + H2O = Fe(II)-heme o + diphosphate. It functions in the pathway porphyrin-containing compound metabolism; heme O biosynthesis; heme O from protoheme: step 1/1. In terms of biological role, converts heme B (protoheme IX) to heme O by substitution of the vinyl group on carbon 2 of heme B porphyrin ring with a hydroxyethyl farnesyl side group. This chain is Protoheme IX farnesyltransferase 1, found in Pyrobaculum aerophilum (strain ATCC 51768 / DSM 7523 / JCM 9630 / CIP 104966 / NBRC 100827 / IM2).